Reading from the N-terminus, the 193-residue chain is Cytidylate kinase (193 aa).

12-20 (GLPGSGTTT) serves as a coordination point for ATP.

The protein belongs to the cytidylate kinase family. Type 2 subfamily.

The protein resides in the cytoplasm. The catalysed reaction is CMP + ATP = CDP + ADP. It carries out the reaction dCMP + ATP = dCDP + ADP. In Methanopyrus kandleri (strain AV19 / DSM 6324 / JCM 9639 / NBRC 100938), this protein is Cytidylate kinase.